Consider the following 279-residue polypeptide: 3-methyl-2-oxobutanoate hydroxymethyltransferase (279 aa).

Mg(2+) is bound by residues aspartate 43 and aspartate 82. 3-methyl-2-oxobutanoate is bound by residues 43–44, aspartate 82, and lysine 112; that span reads DS. A Mg(2+)-binding site is contributed by glutamate 114. Glutamate 181 acts as the Proton acceptor in catalysis.

The protein belongs to the PanB family. As to quaternary structure, homodecamer; pentamer of dimers. The cofactor is Mg(2+).

The protein resides in the cytoplasm. The catalysed reaction is 3-methyl-2-oxobutanoate + (6R)-5,10-methylene-5,6,7,8-tetrahydrofolate + H2O = 2-dehydropantoate + (6S)-5,6,7,8-tetrahydrofolate. The protein operates within cofactor biosynthesis; (R)-pantothenate biosynthesis; (R)-pantoate from 3-methyl-2-oxobutanoate: step 1/2. In terms of biological role, catalyzes the reversible reaction in which hydroxymethyl group from 5,10-methylenetetrahydrofolate is transferred onto alpha-ketoisovalerate to form ketopantoate. The chain is 3-methyl-2-oxobutanoate hydroxymethyltransferase from Geobacillus thermodenitrificans (strain NG80-2).